The primary structure comprises 440 residues: Murein DD-endopeptidase MepM (440 aa).

A helical transmembrane segment spans residues 21–40 (VMLGSLTVLTLAVAVWRPYV). The region spanning 96–141 (HEYVVSTGDTLSSILNQYGIDMGDITQLAAADKELRNLKIGQQLSW) is the LysM domain. Position 314 (His-314) interacts with Zn(2+).

This sequence belongs to the peptidase M23B family. Requires Zn(2+) as cofactor.

It is found in the cell membrane. It participates in cell wall biogenesis; cell wall polysaccharide biosynthesis. Functionally, a murein DD-endopeptidase with specificity for D-Ala-meso-diaminopimelic acid (mDAP) cross-links. Its role is probably to cleave D-Ala-mDAP cross-links to allow insertion of new glycans and thus cell wall expansion. Functionally redundant with MepM and MepH. This chain is Murein DD-endopeptidase MepM (mepM), found in Escherichia coli O6:H1 (strain CFT073 / ATCC 700928 / UPEC).